We begin with the raw amino-acid sequence, 156 residues long: uncharacterized protein (156 aa).

Its subcellular location is the mitochondrion. This is an uncharacterized protein from Paramecium tetraurelia.